We begin with the raw amino-acid sequence, 111 residues long: MGKRIDDETLKKIRLPKEGEIFGVVEKMLGNDRVQVRCVDGKTRVARIPGKMRKRVWIREGDVVLVKPWEFQPERADVTWRYTRVQVDWLKRKGKLDERVTKLLEEIIPGA.

The 73-residue stretch at 11–83 folds into the S1-like domain; that stretch reads KKIRLPKEGE…ERADVTWRYT (73 aa).

It belongs to the eIF-1A family.

Its function is as follows. Seems to be required for maximal rate of protein biosynthesis. Enhances ribosome dissociation into subunits and stabilizes the binding of the initiator Met-tRNA(I) to 40 S ribosomal subunits. The polypeptide is Translation initiation factor 1A (eIF1A) (Methanopyrus kandleri (strain AV19 / DSM 6324 / JCM 9639 / NBRC 100938)).